Here is a 97-residue protein sequence, read N- to C-terminus: Cobalt transport protein CbiN (97 aa).

2 consecutive transmembrane segments (helical) span residues 6 to 26 (VLMILGVIILTLAPLIMYSGL) and 68 to 88 (SLLFALQAAIGALIIGYFFGY).

It belongs to the CbiN family. As to quaternary structure, forms an energy-coupling factor (ECF) transporter complex composed of an ATP-binding protein (A component, CbiO), a transmembrane protein (T component, CbiQ) and 2 possible substrate-capture proteins (S components, CbiM and CbiN) of unknown stoichimetry.

The protein resides in the cell membrane. Its pathway is cofactor biosynthesis; adenosylcobalamin biosynthesis. Functionally, part of the energy-coupling factor (ECF) transporter complex CbiMNOQ involved in cobalt import. The sequence is that of Cobalt transport protein CbiN from Methanococcus maripaludis (strain C7 / ATCC BAA-1331).